The primary structure comprises 367 residues: 3-dehydroquinate synthase (367 aa).

Residues 69 to 74 (DGEAFK), 103 to 107 (GVVGD), 127 to 128 (TT), lysine 140, lysine 149, and 167 to 170 (TLAT) each bind NAD(+). Positions 182, 245, and 262 each coordinate Zn(2+).

Belongs to the sugar phosphate cyclases superfamily. Dehydroquinate synthase family. Co(2+) serves as cofactor. It depends on Zn(2+) as a cofactor. The cofactor is NAD(+).

It is found in the cytoplasm. It catalyses the reaction 7-phospho-2-dehydro-3-deoxy-D-arabino-heptonate = 3-dehydroquinate + phosphate. It participates in metabolic intermediate biosynthesis; chorismate biosynthesis; chorismate from D-erythrose 4-phosphate and phosphoenolpyruvate: step 2/7. Its function is as follows. Catalyzes the conversion of 3-deoxy-D-arabino-heptulosonate 7-phosphate (DAHP) to dehydroquinate (DHQ). This chain is 3-dehydroquinate synthase, found in Azotobacter vinelandii (strain DJ / ATCC BAA-1303).